The primary structure comprises 257 residues: Snake venom serine protease Haly-2 (257 aa).

An N-terminal signal peptide occupies residues Met-1–Ala-18. A propeptide spanning residues Gln-19–Leu-24 is cleaved from the precursor. The 224-residue stretch at Ile-25–Ala-248 folds into the Peptidase S1 domain. Intrachain disulfides connect Cys-31–Cys-162, Cys-49–Cys-65, Cys-97–Cys-255, Cys-141–Cys-209, Cys-173–Cys-188, and Cys-199–Cys-224. His-64 acts as the Charge relay system in catalysis. An N-linked (GlcNAc...) asparagine glycan is attached at Asn-100. Asp-109 serves as the catalytic Charge relay system. Ser-203 acts as the Charge relay system in catalysis.

The protein belongs to the peptidase S1 family. Snake venom subfamily. As to quaternary structure, monomer. In terms of tissue distribution, expressed by the venom gland.

It localises to the secreted. Its function is as follows. Snake venom serine protease that may act in the hemostasis system of the prey. This Gloydius brevicauda (Korean slamosa snake) protein is Snake venom serine protease Haly-2.